The chain runs to 583 residues: Putative glutaminase 3 (583 aa).

The tract at residues 1–29 is disordered; the sequence is MDNKEKEDEELSDELKDQPGPSEKPRTPT. 7 residues coordinate substrate: Ser216, Asn265, Glu311, Asn318, Tyr344, Tyr396, and Val414. 3 ANK repeats span residues 482 to 514, 515 to 548, and 549 to 581; these read DGQNRFMYATKLGDIAAIKRFLLMGHDIHCKDY, DDRTVLHVAAAEGDVVTLEYVLSKWQEDPNPCDR, and YDRTPLDDAKHFNHTACVKLLEEAITVYNLKGQ.

This sequence belongs to the glutaminase family.

It carries out the reaction L-glutamine + H2O = L-glutamate + NH4(+). The protein is Putative glutaminase 3 (glna-3) of Caenorhabditis elegans.